The sequence spans 364 residues: Methylthioribose-1-phosphate isomerase (364 aa).

Asp-246 functions as the Proton donor in the catalytic mechanism.

This sequence belongs to the eIF-2B alpha/beta/delta subunits family. MtnA subfamily.

The protein resides in the cytoplasm. Its subcellular location is the nucleus. It carries out the reaction 5-(methylsulfanyl)-alpha-D-ribose 1-phosphate = 5-(methylsulfanyl)-D-ribulose 1-phosphate. It functions in the pathway amino-acid biosynthesis; L-methionine biosynthesis via salvage pathway; L-methionine from S-methyl-5-thio-alpha-D-ribose 1-phosphate: step 1/6. Its function is as follows. Catalyzes the interconversion of methylthioribose-1-phosphate (MTR-1-P) into methylthioribulose-1-phosphate (MTRu-1-P). This chain is Methylthioribose-1-phosphate isomerase, found in Bombyx mori (Silk moth).